We begin with the raw amino-acid sequence, 292 residues long: 4-hydroxy-tetrahydrodipicolinate synthase (292 aa).

Threonine 45 contacts pyruvate. The active-site Proton donor/acceptor is the tyrosine 133. Lysine 161 (schiff-base intermediate with substrate) is an active-site residue. Isoleucine 203 is a pyruvate binding site.

It belongs to the DapA family. Homotetramer; dimer of dimers.

The protein resides in the cytoplasm. The catalysed reaction is L-aspartate 4-semialdehyde + pyruvate = (2S,4S)-4-hydroxy-2,3,4,5-tetrahydrodipicolinate + H2O + H(+). It functions in the pathway amino-acid biosynthesis; L-lysine biosynthesis via DAP pathway; (S)-tetrahydrodipicolinate from L-aspartate: step 3/4. Functionally, catalyzes the condensation of (S)-aspartate-beta-semialdehyde [(S)-ASA] and pyruvate to 4-hydroxy-tetrahydrodipicolinate (HTPA). This chain is 4-hydroxy-tetrahydrodipicolinate synthase, found in Nitrosococcus oceani (strain ATCC 19707 / BCRC 17464 / JCM 30415 / NCIMB 11848 / C-107).